Consider the following 373-residue polypeptide: C-C chemokine receptor type 2 (373 aa).

Topologically, residues methionine 1–alanine 55 are extracellular. Residues tryptophan 56–cysteine 83 traverse the membrane as a helical segment. Topologically, residues lysine 84–tyrosine 93 are cytoplasmic. Residues leucine 94–tyrosine 114 form a helical membrane-spanning segment. Residues alanine 115 to lysine 127 lie on the Extracellular side of the membrane. A disulfide bridge connects residues cysteine 126 and cysteine 203. A helical membrane pass occupies residues valine 128–isoleucine 149. At aspartate 150 to threonine 166 the chain is on the cytoplasmic side. Phosphotyrosine; by JAK2 is present on tyrosine 152. A helical transmembrane segment spans residues valine 167–phenylalanine 191. Topologically, residues threonine 192–arginine 219 are extracellular. A helical transmembrane segment spans residues asparagine 220–leucine 239. Topologically, residues histidine 240 to arginine 256 are cytoplasmic. Residues leucine 257 to phenylalanine 281 traverse the membrane as a helical segment. Residues glutamine 282–glutamine 298 lie on the Extracellular side of the membrane. Residues alanine 299–glycine 322 form a helical membrane-spanning segment. Topologically, residues glutamate 323–leucine 373 are cytoplasmic.

The protein belongs to the G-protein coupled receptor 1 family. As to quaternary structure, interacts with ARRB1. Interacts (via extracellular N-terminal region) with beta-defensin DEFB106A/DEFB106B; this interaction may preferentially require specific tyrosine sulfation on CCR2. Interacts with NUP85; the interaction is required for CCR2 clusters formation on the cell membrane and CCR2 signaling. In terms of processing, N-glycosylated. Post-translationally, sulfation increases the affinity for both monomeric and dimeric CCL2 with stronger binding to the monomeric form. Binding of sulfated CCR2 to CCL2 promotes conversion of CCL2 from dimer to monomer. As to expression, epressed in mature thymocytes. Detected in monocyte/macrophage cell lines, but not in nonhematopoietic cell lines.

The protein resides in the cell membrane. Its function is as follows. Key functional receptor for CCL2 but can also bind CCL7 and CCL12 chemokines. Its binding with CCL2 on monocytes and macrophages mediates chemotaxis and migration induction through the activation of the PI3K cascade, the small G protein Rac and lamellipodium protrusion. Also acts as a receptor for the beta-defensin DEFB106A/DEFB106B. Regulates the expression of T-cell inflammatory cytokines and T-cell differentiation, promoting the differentiation of T-cells into T-helper 17 cells (Th17) during inflammation. Facilitates the export of mature thymocytes by enhancing directional movement of thymocytes to sphingosine-1-phosphate stimulation and up-regulation of S1P1R expression; signals through the JAK-STAT pathway to regulate FOXO1 activity leading to an increased expression of S1P1R. Plays an important role in mediating peripheral nerve injury-induced neuropathic pain. Increases NMDA-mediated synaptic transmission in both dopamine D1 and D2 receptor-containing neurons, which may be caused by MAPK/ERK-dependent phosphorylation of GRIN2B/NMDAR2B. Mediates the recruitment of macrophages and monocytes to the injury site following brain injury. The chain is C-C chemokine receptor type 2 (Ccr2) from Mus musculus (Mouse).